The following is a 1140-amino-acid chain: Kinesin-like protein KIN-14O (1140 aa).

The span at 1-12 (MLESEFQREHAF) shows a compositional bias: basic and acidic residues. Disordered stretches follow at residues 1–37 (MLES…ADDD), 50–81 (NPAE…DEDS), 161–217 (SPGS…GGHK), and 323–347 (ASGT…KEED). Residues 161 to 179 (SPGSSHGGSTPRSPFSPSS) are compositionally biased toward low complexity. The segment covering 180 to 193 (PRERHNKGLADSRF) has biased composition (basic and acidic residues). The span at 197–209 (LPNSSALDPSSPG) shows a compositional bias: polar residues. Positions 327-546 (SEENETEKSK…KAKEMEEKSE (220 aa)) form a coiled coil. Positions 332-347 (TEKSKLEEKKKDKEED) are enriched in basic and acidic residues. A Kinesin motor domain is found at 632-952 (NIRVYCRVRP…LKFAERVSGV (321 aa)). 716–723 (GQTGSGKT) provides a ligand contact to ATP. Positions 1002–1018 (LGQSDDFNSEAGDSQLS) are enriched in polar residues. 2 disordered regions span residues 1002–1021 (LGQS…SIED) and 1028–1140 (DYTR…KRWS). The segment covering 1066–1078 (EGRKPLKISDKPK) has biased composition (basic and acidic residues). Residues 1099 to 1130 (TMRTTNIAKATSALLSPSSQGMKKTGSASNFL) show a composition bias toward polar residues.

The protein belongs to the TRAFAC class myosin-kinesin ATPase superfamily. Kinesin family. KIN-14 subfamily.

In Arabidopsis thaliana (Mouse-ear cress), this protein is Kinesin-like protein KIN-14O.